The chain runs to 762 residues: 5-methyltetrahydropteroyltriglutamate--homocysteine methyltransferase (762 aa).

Residues 18 to 21 (REWK) and Lys112 contribute to the 5-methyltetrahydropteroyltri-L-glutamate site. L-homocysteine contacts are provided by residues 435–437 (IGS) and Glu488. Residues 435–437 (IGS) and Glu488 each bind L-methionine. Residues 519–520 (RC) and Trp565 each bind 5-methyltetrahydropteroyltri-L-glutamate. Asp603 serves as a coordination point for L-homocysteine. Asp603 contributes to the L-methionine binding site. 5-methyltetrahydropteroyltri-L-glutamate is bound at residue Glu609. Residues His645, Cys647, and Glu669 each contribute to the Zn(2+) site. His698 (proton donor) is an active-site residue. A Zn(2+)-binding site is contributed by Cys730.

It belongs to the vitamin-B12 independent methionine synthase family. Requires Zn(2+) as cofactor.

The enzyme catalyses 5-methyltetrahydropteroyltri-L-glutamate + L-homocysteine = tetrahydropteroyltri-L-glutamate + L-methionine. The protein operates within amino-acid biosynthesis; L-methionine biosynthesis via de novo pathway; L-methionine from L-homocysteine (MetE route): step 1/1. In terms of biological role, catalyzes the transfer of a methyl group from 5-methyltetrahydrofolate to homocysteine resulting in methionine formation. In Bacillus licheniformis (strain ATCC 14580 / DSM 13 / JCM 2505 / CCUG 7422 / NBRC 12200 / NCIMB 9375 / NCTC 10341 / NRRL NRS-1264 / Gibson 46), this protein is 5-methyltetrahydropteroyltriglutamate--homocysteine methyltransferase.